Reading from the N-terminus, the 124-residue chain is Small ribosomal subunit protein uS12 (124 aa).

The tract at residues 8 to 30 (IRSARQDTEKQTKSPALKSCPQR) is disordered. Asp89 is modified (3-methylthioaspartic acid). The segment at 103-124 (DTAGVKDRKQSRSKYGAKKPKA) is disordered. Positions 113-124 (SRSKYGAKKPKA) are enriched in basic residues.

This sequence belongs to the universal ribosomal protein uS12 family. As to quaternary structure, part of the 30S ribosomal subunit. Contacts proteins S8 and S17. May interact with IF1 in the 30S initiation complex.

Its function is as follows. With S4 and S5 plays an important role in translational accuracy. Interacts with and stabilizes bases of the 16S rRNA that are involved in tRNA selection in the A site and with the mRNA backbone. Located at the interface of the 30S and 50S subunits, it traverses the body of the 30S subunit contacting proteins on the other side and probably holding the rRNA structure together. The combined cluster of proteins S8, S12 and S17 appears to hold together the shoulder and platform of the 30S subunit. This Trichodesmium erythraeum (strain IMS101) protein is Small ribosomal subunit protein uS12.